A 143-amino-acid polypeptide reads, in one-letter code: Hemoglobin subunit alpha-1 (143 aa).

Position 2 is an N-acetylserine (S2). In terms of domain architecture, Globin spans 2 to 143 (SLSSKDKATV…RALALAEKYR (142 aa)). H60 contacts O2. H89 lines the heme b pocket.

This sequence belongs to the globin family. Hb 1 is a heterotetramer of two alpha-1 and two beta-1 chains. Hb 3 is a heterotetramer of two alpha-1 and two beta-2 chains. Red blood cells.

Functionally, involved in oxygen transport from gills to the various peripheral tissues. The protein is Hemoglobin subunit alpha-1 (hba1) of Gadus morhua (Atlantic cod).